A 339-amino-acid chain; its full sequence is Phosphoribosylformylglycinamidine cyclo-ligase (339 aa).

It belongs to the AIR synthase family.

The protein resides in the cytoplasm. It carries out the reaction 2-formamido-N(1)-(5-O-phospho-beta-D-ribosyl)acetamidine + ATP = 5-amino-1-(5-phospho-beta-D-ribosyl)imidazole + ADP + phosphate + H(+). It participates in purine metabolism; IMP biosynthesis via de novo pathway; 5-amino-1-(5-phospho-D-ribosyl)imidazole from N(2)-formyl-N(1)-(5-phospho-D-ribosyl)glycinamide: step 2/2. This chain is Phosphoribosylformylglycinamidine cyclo-ligase, found in Methanobrevibacter smithii (strain ATCC 35061 / DSM 861 / OCM 144 / PS).